The primary structure comprises 146 residues: Bifunctional adenosine 5'-phosphosulfate phosphorylase/adenylylsulfatase HINT4 (146 aa).

The HIT domain maps to 9–120; sequence IFCEIVRNPT…YVPRWKAIKY (112 aa). The Histidine triad motif signature appears at 101–105; the sequence is HLHLH. The active-site Tele-AMP-histidine intermediate is the H105.

In terms of assembly, homodimer.

It is found in the peroxisome. It catalyses the reaction sulfate + ADP + H(+) = adenosine 5'-phosphosulfate + phosphate. It carries out the reaction adenosine 5'-phosphosulfate + H2O = sulfate + AMP + 2 H(+). The adenosine 5'-phosphosulfate phosphorylase activity is enhanced at low pH. Possesses adenylylsulfatase activity in vitro, releasing AMP and sulfate from adenylyl sulfate. Also possesses adenosine 5'-phosphosulfate (APS) phosphorylase activity in vitro. Catalyzes the phosphorolysis of APS, leading to ADP and sulfate. In Arabidopsis thaliana (Mouse-ear cress), this protein is Bifunctional adenosine 5'-phosphosulfate phosphorylase/adenylylsulfatase HINT4.